A 380-amino-acid chain; its full sequence is Cytochrome b (380 aa).

The next 4 helical transmembrane spans lie at 34-54 (FGSLLGICLTTQILTGLLLAM), 78-99 (WLIRNIHANGASFFFICIYLHI), 114-134 (WNTGILLLLTLMATAFVGYVL), and 179-199 (FFALHFLLPFMIAGLTLIHLT). Positions 84 and 98 each coordinate heme b. Heme b-binding residues include His183 and His197. His202 is an a ubiquinone binding site. 4 consecutive transmembrane segments (helical) span residues 227–247 (LKDTLGFMLMLLPLTTLALFS), 289–309 (LGGVLALAASVLILFLSPLLH), 321–341 (LSQLLFWILIANLFILTWVGS), and 348–368 (FIIIGQLASLTYFTILLILLP).

It belongs to the cytochrome b family. The cytochrome bc1 complex contains 11 subunits: 3 respiratory subunits (MT-CYB, CYC1 and UQCRFS1), 2 core proteins (UQCRC1 and UQCRC2) and 6 low-molecular weight proteins (UQCRH/QCR6, UQCRB/QCR7, UQCRQ/QCR8, UQCR10/QCR9, UQCR11/QCR10 and a cleavage product of UQCRFS1). This cytochrome bc1 complex then forms a dimer. Requires heme b as cofactor.

The protein localises to the mitochondrion inner membrane. Component of the ubiquinol-cytochrome c reductase complex (complex III or cytochrome b-c1 complex) that is part of the mitochondrial respiratory chain. The b-c1 complex mediates electron transfer from ubiquinol to cytochrome c. Contributes to the generation of a proton gradient across the mitochondrial membrane that is then used for ATP synthesis. This is Cytochrome b (MT-CYB) from Fregetta tropica (Black-bellied storm-petrel).